The following is a 116-amino-acid chain: Nascent polypeptide-associated complex protein (116 aa).

Residues Pro6–Lys70 enclose the NAC-A/B domain.

It belongs to the NAC-alpha family. In terms of assembly, homodimer. Interacts with the ribosome. Binds ribosomal RNA.

Its function is as follows. Contacts the emerging nascent chain on the ribosome. This is Nascent polypeptide-associated complex protein from Sulfolobus acidocaldarius (strain ATCC 33909 / DSM 639 / JCM 8929 / NBRC 15157 / NCIMB 11770).